Here is a 396-residue protein sequence, read N- to C-terminus: Decapping and exoribonuclease protein (396 aa).

Residues 1–20 (MDPRGTKRGAEKTEVAEPRN) are compositionally biased toward basic and acidic residues. The segment at 1 to 37 (MDPRGTKRGAEKTEVAEPRNKLPRPAPSLPTDPALYS) is disordered. Residues R58, E101, and 131-133 (WRG) contribute to the substrate site. E192 provides a ligand contact to Mg(2+). Residues C217 and E234 each coordinate substrate. Residues E234, D236, E253, and L254 each coordinate Mg(2+). Substrate-binding residues include K255 and Q280. At T392 the chain carries Phosphothreonine. A Phosphoserine modification is found at S394.

This sequence belongs to the DXO/Dom3Z family. The cofactor is Mg(2+). In terms of tissue distribution, ubiquitously expressed.

The protein localises to the nucleus. The catalysed reaction is a 5'-end triphospho-ribonucleoside in mRNA + H2O = a 5'-end phospho-ribonucleoside in mRNA + diphosphate + H(+). It carries out the reaction a 5'-end NAD(+)-phospho-ribonucleoside in mRNA + H2O = a 5'-end phospho-ribonucleoside in mRNA + NAD(+) + H(+). It catalyses the reaction a 5'-end NAD(+)-phospho-ribonucleoside in snoRNA + H2O = a 5'-end phospho-ribonucleoside in snoRNA + NAD(+) + H(+). The enzyme catalyses a 5'-end (N(7)-methyl 5'-triphosphoguanosine)-ribonucleoside-ribonucleotide in mRNA + H2O = a (N(7)-methyl 5'-triphosphoguanosine)-nucleoside + a 5'-end phospho-ribonucleoside in mRNA + H(+). The catalysed reaction is a 5'-end FAD-phospho-ribonucleoside in mRNA + H2O = a 5'-end phospho-ribonucleoside in mRNA + FAD + H(+). It carries out the reaction a 5'-end CoA-ribonucleoside in mRNA + H2O = 3'-dephospho-CoA + a 5'-end phospho-ribonucleoside in mRNA + H(+). Decapping enzyme for NAD-capped RNAs: specifically hydrolyzes the nicotinamide adenine dinucleotide (NAD) cap from a subset of RNAs by removing the entire NAD moiety from the 5'-end of an NAD-capped RNA. The NAD-cap is present at the 5'-end of some RNAs and snoRNAs. In contrast to the canonical 5'-end N7 methylguanosine (m7G) cap, the NAD cap promotes mRNA decay. Preferentially acts on NAD-capped transcripts in response to environmental stress. Also acts as a non-canonical decapping enzyme that removes the entire cap structure of m7G capped or incompletely capped RNAs and mediates their subsequent degradation. Specifically degrades pre-mRNAs with a defective 5'-end m7G cap and is part of a pre-mRNA capping quality control. Has decapping activity toward incomplete 5'-end m7G cap mRNAs such as unmethylated 5'-end-capped RNA (cap0), while it has no activity toward 2'-O-ribose methylated m7G cap (cap1). In contrast to canonical decapping enzymes DCP2 and NUDT16, which cleave the cap within the triphosphate linkage, the decapping activity releases the entire cap structure GpppN and a 5'-end monophosphate RNA. Also has 5'-3' exoribonuclease activities: The 5'-end monophosphate RNA is then degraded by the 5'-3' exoribonuclease activity, enabling this enzyme to decap and degrade incompletely capped mRNAs. Also possesses RNA 5'-pyrophosphohydrolase activity by hydrolyzing the 5'-end triphosphate to release pyrophosphates. Exhibits decapping activity towards FAD-capped RNAs. Exhibits decapping activity towards dpCoA-capped RNAs in vitro. This is Decapping and exoribonuclease protein from Homo sapiens (Human).